The sequence spans 165 residues: MSSTFSGDETAPFFGFLGAAAALVFSCMGAAYGTAKSGVGVASMGVMRPELVMKSIVPVVMAGVLGIYGLIIAVIISTGINPKAKSYYLFDGYAHLSSGLACGLAGLSAGMAIGIVGDAGVRANAQQPKLFVGMILILIFAEALALYGLIVGIILSSRAGQSRAD.

The Lumenal segment spans residues methionine 1 to threonine 10. The chain crosses the membrane as a helical span at residues alanine 11–glycine 33. The Cytoplasmic portion of the chain corresponds to threonine 34–serine 55. Residues isoleucine 56 to isoleucine 76 traverse the membrane as a helical segment. At serine 77–histidine 95 the chain is on the lumenal side. The helical transmembrane segment at leucine 96 to glycine 117 threads the bilayer. Residues aspartate 118–lysine 129 are Cytoplasmic-facing. Residues leucine 130–leucine 155 traverse the membrane as a helical segment. At serine 156 to aspartate 165 the chain is on the lumenal side.

Belongs to the V-ATPase proteolipid subunit family. V-ATPase is a heteromultimeric enzyme composed of a peripheral catalytic V1 complex (main components: subunits A, B, C, D, E, and F) attached to an integral membrane V0 proton pore complex (main component: the proteolipid protein; which is present as a hexamer that forms the proton-conducting pore). In terms of tissue distribution, higher expression in leaves, followed by roots and weakly in flowers. Expression in leaves is light-dependent.

Its subcellular location is the vacuole membrane. In terms of biological role, proton-conducting pore forming subunit of the membrane integral V0 complex of vacuolar ATPase. V-ATPase is responsible for acidifying a variety of intracellular compartments in eukaryotic cells. Necessary for the crassulacean acid metabolism. The protein is V-type proton ATPase 16 kDa proteolipid subunit of Kalanchoe daigremontiana (Devil's backbone).